Consider the following 212-residue polypeptide: Ribonuclease HII (212 aa).

An RNase H type-2 domain is found at 12–201; the sequence is ELVAGVDEVG…VRAMLEQVSI (190 aa). D18, E19, and D110 together coordinate a divalent metal cation.

It belongs to the RNase HII family. Mn(2+) serves as cofactor. Mg(2+) is required as a cofactor.

It is found in the cytoplasm. It carries out the reaction Endonucleolytic cleavage to 5'-phosphomonoester.. In terms of biological role, endonuclease that specifically degrades the RNA of RNA-DNA hybrids. This Stutzerimonas stutzeri (strain A1501) (Pseudomonas stutzeri) protein is Ribonuclease HII.